The primary structure comprises 282 residues: Pantothenate synthetase (282 aa).

Methionine 30–histidine 37 is a binding site for ATP. Histidine 37 (proton donor) is an active-site residue. Glutamine 61 contacts (R)-pantoate. Glutamine 61 contributes to the beta-alanine binding site. Glycine 149 to aspartate 152 lines the ATP pocket. Glutamine 155 contacts (R)-pantoate. Residue methionine 186–arginine 189 coordinates ATP.

The protein belongs to the pantothenate synthetase family. Homodimer.

Its subcellular location is the cytoplasm. The enzyme catalyses (R)-pantoate + beta-alanine + ATP = (R)-pantothenate + AMP + diphosphate + H(+). The protein operates within cofactor biosynthesis; (R)-pantothenate biosynthesis; (R)-pantothenate from (R)-pantoate and beta-alanine: step 1/1. Its function is as follows. Catalyzes the condensation of pantoate with beta-alanine in an ATP-dependent reaction via a pantoyl-adenylate intermediate. In Alteromonas mediterranea (strain DSM 17117 / CIP 110805 / LMG 28347 / Deep ecotype), this protein is Pantothenate synthetase.